Consider the following 688-residue polypeptide: GTPase IMAP family member 8 (688 aa).

The disordered stretch occupies residues 22 to 44 (TSIGQGERPRASRGQESNFKQSQ). The segment covering 35 to 44 (GQESNFKQSQ) has biased composition (polar residues). AIG1-type G domains lie at 46-246 (TSTL…TENS), 281-471 (TPEL…VIRE), and 472-681 (KELL…SAVG). The interval 55 to 62 (GKQGAGKS) is G1. GTP-binding positions include 55 to 63 (GKQGAGKSA) and Ser-76. Residues 82–86 (MVTKR) form a G2 region. Residues 103–106 (DTPD) are G3. The tract at residues 171–174 (TRED) is G4. GTP is bound by residues 172-174 (RED) and Asn-208. Positions 207–209 (NNK) are G5.

This sequence belongs to the TRAFAC class TrmE-Era-EngA-EngB-Septin-like GTPase superfamily. AIG1/Toc34/Toc159-like paraseptin GTPase family. IAN subfamily. In terms of tissue distribution, spleen, thymus and T-cells. Greatly reduced in T-cells from lymphopenic rats.

Its subcellular location is the endoplasmic reticulum. It is found in the golgi apparatus. The protein localises to the mitochondrion. The protein resides in the cytoplasm. It localises to the cytosol. In terms of biological role, exerts an anti-apoptotic effect in the immune system and is involved in responses to infections. This chain is GTPase IMAP family member 8 (Gimap8), found in Rattus norvegicus (Rat).